Reading from the N-terminus, the 302-residue chain is Rab effector Noc2 (302 aa).

A RabBD domain is found at 41-158 (QRRTQCLSPG…KRSGAWFYKG (118 aa)). The FYVE-type zinc finger occupies 89–146 (GNGVSQCLLCGEMLGFLGSSSVFCKDCRKKVCTKCGIEASPGQKRPLWLCKICSEQRE). The Zn(2+) site is built by C95, C98, C112, C115, C120, C123, C138, and C141. 2 disordered regions span residues 174-194 (DPHF…SAEV) and 206-302 (VSSD…TTHY). S248 carries the post-translational modification Phosphoserine. The span at 258–269 (SHLSGSQSSLGS) shows a compositional bias: low complexity.

As to quaternary structure, recruited to dense-core vesicles through specific interaction with RAB27A in endocrine cells. Interacts with RAB3A, RAB3B, RAB3C and RAB3D. Interacts with ZYX. In terms of tissue distribution, highly expressed in pancreatic islets and parotid. High to moderate expression in adrenal gland, pituitary gland and ovary.

It is found in the cytoplasm. It localises to the cytoplasmic vesicle. The protein resides in the secretory vesicle membrane. In terms of biological role, rab GTPase effector involved in the late steps of regulated exocytosis, both in endocrine and exocrine cells. Regulates the exocytosis of dense-core vesicles in neuroendocrine cells through interaction with RAB27A. Acts as a potential RAB3B effector protein in epithelial cells. This is Rab effector Noc2 (Rph3al) from Rattus norvegicus (Rat).